We begin with the raw amino-acid sequence, 185 residues long: MINDIKKDAQERMGKSIEALGRNLASIRTGRAHPSILDSVKVPAWGSDMPLNQVAAITVEDARTLKIVAHDKNLSAAIEKAILTSDLGLNPSSAGTTIRVPMPALTEETRKGYTKQASSVAEDAKVAVRNVRRDALADLKKLTKDKEISEDEERRAADEIQKLTDKFVAEIDAAFKAKEKDLLAV.

Belongs to the RRF family.

It is found in the cytoplasm. In terms of biological role, responsible for the release of ribosomes from messenger RNA at the termination of protein biosynthesis. May increase the efficiency of translation by recycling ribosomes from one round of translation to another. The sequence is that of Ribosome-recycling factor from Pseudomonas entomophila (strain L48).